The primary structure comprises 59 residues: Large ribosomal subunit protein bL32 (59 aa).

Belongs to the bacterial ribosomal protein bL32 family. As to quaternary structure, part of the 50S ribosomal subunit.

The sequence is that of Large ribosomal subunit protein bL32 (rpmF) from Bacillus subtilis (strain 168).